The primary structure comprises 125 residues: Protein 5 (125 aa).

This Hordeum vulgare (Barley) protein is Protein 5 (5).